The primary structure comprises 600 residues: Elongation factor 4 (600 aa).

The tr-type G domain maps to 6–188 (QFIRNFSIIA…QITKQIPSPK (183 aa)). GTP is bound by residues 18–23 (DHGKST) and 135–138 (NKID).

Belongs to the TRAFAC class translation factor GTPase superfamily. Classic translation factor GTPase family. LepA subfamily.

It is found in the cell inner membrane. The catalysed reaction is GTP + H2O = GDP + phosphate + H(+). Required for accurate and efficient protein synthesis under certain stress conditions. May act as a fidelity factor of the translation reaction, by catalyzing a one-codon backward translocation of tRNAs on improperly translocated ribosomes. Back-translocation proceeds from a post-translocation (POST) complex to a pre-translocation (PRE) complex, thus giving elongation factor G a second chance to translocate the tRNAs correctly. Binds to ribosomes in a GTP-dependent manner. The chain is Elongation factor 4 from Leptospira interrogans serogroup Icterohaemorrhagiae serovar copenhageni (strain Fiocruz L1-130).